The chain runs to 61 residues: Small ribosomal subunit protein uS14 (61 aa).

Residues C24, C27, C40, and C43 each contribute to the Zn(2+) site.

This sequence belongs to the universal ribosomal protein uS14 family. Zinc-binding uS14 subfamily. As to quaternary structure, part of the 30S ribosomal subunit. Contacts proteins S3 and S10. Requires Zn(2+) as cofactor.

Binds 16S rRNA, required for the assembly of 30S particles and may also be responsible for determining the conformation of the 16S rRNA at the A site. This is Small ribosomal subunit protein uS14 from Helicobacter pylori (strain J99 / ATCC 700824) (Campylobacter pylori J99).